A 148-amino-acid chain; its full sequence is Large ribosomal subunit protein bL9 (148 aa).

This sequence belongs to the bacterial ribosomal protein bL9 family.

In terms of biological role, binds to the 23S rRNA. The chain is Large ribosomal subunit protein bL9 from Thermus thermophilus.